The chain runs to 394 residues: MAKIETRTEPMVLNMGPHHPSMHGVLRLIVTLDGEDVIDCEPVIGYLHRGMEKIAENRTNVMYVPYVSRWDYAAGMFNEAITVNAPEKLADIAVPKRAQYIRVIMLELNRIANHLLWLGPFMADVGAQTPFFYIFREREMIYDLWEAATGMRLINNNYFRIGGVAVDLPYGWVDKCVDFCDYFDPKVDEYEKLITNNPIFRRRIEGIGCITRDEAINWGLSGPMLRASGVKWDLRKVDHYECYDDFDWEVHWETAGDCFARYLVRIREMRESVKIIRQALKGLPGGPYENLEAKRMAEGKKSAWNDFDYQYIAKKVAPTFKIPKGEHYVRLESGKGELGIFIVGNDDVFPWRWKIRAADFNNLQILPHILKGVKVADIMAILGSIDIIMGSVDR.

Belongs to the complex I 49 kDa subunit family. NDH-1 can be composed of about 15 different subunits; different subcomplexes with different compositions have been identified which probably have different functions.

It is found in the cellular thylakoid membrane. The catalysed reaction is a plastoquinone + NADH + (n+1) H(+)(in) = a plastoquinol + NAD(+) + n H(+)(out). It catalyses the reaction a plastoquinone + NADPH + (n+1) H(+)(in) = a plastoquinol + NADP(+) + n H(+)(out). Functionally, NDH-1 shuttles electrons from an unknown electron donor, via FMN and iron-sulfur (Fe-S) centers, to quinones in the respiratory and/or the photosynthetic chain. The immediate electron acceptor for the enzyme in this species is believed to be plastoquinone. Couples the redox reaction to proton translocation, and thus conserves the redox energy in a proton gradient. Cyanobacterial NDH-1 also plays a role in inorganic carbon-concentration. The protein is NAD(P)H-quinone oxidoreductase subunit H of Microcystis aeruginosa (strain NIES-843 / IAM M-2473).